Consider the following 300-residue polypeptide: ATP synthase gamma chain (300 aa).

This sequence belongs to the ATPase gamma chain family. In terms of assembly, F-type ATPases have 2 components, CF(1) - the catalytic core - and CF(0) - the membrane proton channel. CF(1) has five subunits: alpha(3), beta(3), gamma(1), delta(1), epsilon(1). CF(0) has three main subunits: a, b and c.

It localises to the cell membrane. Produces ATP from ADP in the presence of a proton gradient across the membrane. The gamma chain is believed to be important in regulating ATPase activity and the flow of protons through the CF(0) complex. The polypeptide is ATP synthase gamma chain (Enterococcus hirae (strain ATCC 9790 / DSM 20160 / JCM 8729 / LMG 6399 / NBRC 3181 / NCIMB 6459 / NCDO 1258 / NCTC 12367 / WDCM 00089 / R)).